Consider the following 405-residue polypeptide: Acetylornithine aminotransferase (405 aa).

Residues 107–108 (GA) and phenylalanine 140 contribute to the pyridoxal 5'-phosphate site. Arginine 143 lines the N(2)-acetyl-L-ornithine pocket. A pyridoxal 5'-phosphate-binding site is contributed by 225–228 (DEVQ). Position 254 is an N6-(pyridoxal phosphate)lysine (lysine 254). Serine 282 lines the N(2)-acetyl-L-ornithine pocket. Pyridoxal 5'-phosphate is bound at residue threonine 283.

This sequence belongs to the class-III pyridoxal-phosphate-dependent aminotransferase family. ArgD subfamily. In terms of assembly, homodimer. Pyridoxal 5'-phosphate is required as a cofactor.

It localises to the cytoplasm. The enzyme catalyses N(2)-acetyl-L-ornithine + 2-oxoglutarate = N-acetyl-L-glutamate 5-semialdehyde + L-glutamate. It functions in the pathway amino-acid biosynthesis; L-arginine biosynthesis; N(2)-acetyl-L-ornithine from L-glutamate: step 4/4. The polypeptide is Acetylornithine aminotransferase (Shewanella oneidensis (strain ATCC 700550 / JCM 31522 / CIP 106686 / LMG 19005 / NCIMB 14063 / MR-1)).